We begin with the raw amino-acid sequence, 352 residues long: Protein SIS1 (352 aa).

Residues 4–70 (ETKLYDLLGV…REIYDQYGLE (67 aa)) enclose the J domain. The residue at position 275 (Ser275) is a Phosphoserine. The disordered stretch occupies residues 300–325 (VQPVQPSQTSTYPGQGMPTPKNPSQR). The segment covering 301–312 (QPVQPSQTSTYP) has biased composition (polar residues).

Interacts with polyadenylate-binding protein PAB1.

It is found in the cytoplasm. The protein resides in the nucleus. Functionally, required for nuclear migration during mitosis. It is required for the normal initiation of translation. Might mediate the dissociation of a specific protein complex of the translation machinery. Essential for viability. The polypeptide is Protein SIS1 (SIS1) (Saccharomyces cerevisiae (strain ATCC 204508 / S288c) (Baker's yeast)).